A 258-amino-acid chain; its full sequence is MKEILITNDDGFEATGLLALKEALSELDGVNVTIVAPSSEKSACAHSLTLTRPLRFIKLDDNFFKLDDATPSDCVYLALHALYNKKPDLVISGINHGANLGEDITYSGTCGAAMEGVLQGIRSIAFSQFYENNSLNELGFELAKEVVKFITPKVLNDEISLNPREFLNVNIPATTSKNFKGYAVVPAGRRTYATHATLNRNPRGIEYYWLGNAALEYEKGEPSDISKVNEGFATITPIKLNMTSYESLESLKGKFDAK.

4 residues coordinate a divalent metal cation: Asp-9, Asp-10, Ser-42, and Asn-95.

It belongs to the SurE nucleotidase family. A divalent metal cation is required as a cofactor.

Its subcellular location is the cytoplasm. The enzyme catalyses a ribonucleoside 5'-phosphate + H2O = a ribonucleoside + phosphate. Functionally, nucleotidase that shows phosphatase activity on nucleoside 5'-monophosphates. The sequence is that of 5'-nucleotidase SurE from Campylobacter concisus (strain 13826).